The chain runs to 486 residues: MVEFKNIVKYFPDIDKPILDSINLKIGEVKIFTVVGKNGEGKSTLAKIIAGLIEFDEGEILVNGIKQKNWNVDKAKNNGIYLVSQVPNLKMNLRVWEYLSIYWFGYEFFMPMNKSKTYKYYRWLMQFYKISFDLDKKIKDLNIKEIYFLLIIAALKENAKIIIFDESAAYFSQKEAQAFIKLLVLLKKSGVASLFITHSEITDAIKFSDEFIILKDGKCFRTVNKESILSKLESSSDKVFVANINCNKFEKDPIKFNLFFEDFWKYDVSFSLNKRGVLGIIGEEAVIKTWEKLFLGELLFVGCIKIDGIRYERINIFECKAGFLPLGIGNLFPDNSSILDNFLAKFMNFENKIFIRQSYINQIKDFFKKKMEFYSEEKIYRILYSKSLAFSGGTLKKFALYREMYIAKSFLICFSPLSNLDHKAYNEMSVAIRNYSKEKPVLLITSNLDELLLLSDNILAMKMGEVLLNVSREKISKEKLKELLFL.

ABC transporter domains lie at Val-2–Val-241 and Phe-249–Leu-486. Gly-36–Ser-43 lines the ATP pocket.

This sequence belongs to the ABC transporter superfamily.

This is an uncharacterized protein from Borreliella burgdorferi (strain ATCC 35210 / DSM 4680 / CIP 102532 / B31) (Borrelia burgdorferi).